Here is a 176-residue protein sequence, read N- to C-terminus: ATP synthase subunit b (176 aa).

A helical transmembrane segment spans residues 14-34 (STTLGTMIVVSGAFLILMLLL).

It belongs to the ATPase B chain family. As to quaternary structure, F-type ATPases have 2 components, F(1) - the catalytic core - and F(0) - the membrane proton channel. F(1) has five subunits: alpha(3), beta(3), gamma(1), delta(1), epsilon(1). F(0) has three main subunits: a(1), b(2) and c(10-14). The alpha and beta chains form an alternating ring which encloses part of the gamma chain. F(1) is attached to F(0) by a central stalk formed by the gamma and epsilon chains, while a peripheral stalk is formed by the delta and b chains.

It localises to the cell membrane. Its function is as follows. F(1)F(0) ATP synthase produces ATP from ADP in the presence of a proton or sodium gradient. F-type ATPases consist of two structural domains, F(1) containing the extramembraneous catalytic core and F(0) containing the membrane proton channel, linked together by a central stalk and a peripheral stalk. During catalysis, ATP synthesis in the catalytic domain of F(1) is coupled via a rotary mechanism of the central stalk subunits to proton translocation. Functionally, component of the F(0) channel, it forms part of the peripheral stalk, linking F(1) to F(0). This Enterococcus faecalis (strain ATCC 700802 / V583) protein is ATP synthase subunit b.